The following is a 283-amino-acid chain: MFDKTRLPYVALDVICVLLAGLPFAILTSRHTPFQRGIFCNDDSIKYPYKEDTIPYALLGGIVIPFCIIVMSIGESLSVYFNVLHSNSFVGNPYIATIYKAVGAFLFGVSASQSLTDIAKYTIGSLRPHFLAICNPDWSKINCSDGYIEDYICQGNEEKVKEGRLSFYSGHSSFSMYCMLFVALYLQARMKGDWARLLRPMLQFGLIAFSIYVGLSRVSDYKHHWSDVTVGLIQGAAMAILVALYVSDFFKDTHSYKERKEEDPHTTLHETASSRNYSTNHEP.

The Cytoplasmic portion of the chain corresponds to 1 to 6; that stretch reads MFDKTR. The PDZ-binding; involved in localization to the apical cell membrane motif lies at 5 to 7; it reads TRL. A helical membrane pass occupies residues 7–27; that stretch reads LPYVALDVICVLLAGLPFAIL. The Extracellular segment spans residues 28–53; the sequence is TSRHTPFQRGIFCNDDSIKYPYKEDT. Residues 54-74 form a helical membrane-spanning segment; the sequence is IPYALLGGIVIPFCIIVMSIG. At 75 to 88 the chain is on the cytoplasmic side; that stretch reads ESLSVYFNVLHSNS. A helical membrane pass occupies residues 89-109; sequence FVGNPYIATIYKAVGAFLFGV. Residues 110-164 are Extracellular-facing; that stretch reads SASQSLTDIAKYTIGSLRPHFLAICNPDWSKINCSDGYIEDYICQGNEEKVKEGR. A phosphatase sequence motif I region spans residues 120 to 128; that stretch reads KYTIGSLRP. An N-linked (GlcNAc...) asparagine glycan is attached at N142. The chain crosses the membrane as a helical span at residues 165-185; that stretch reads LSFYSGHSSFSMYCMLFVALY. The interval 168-171 is phosphatase sequence motif II; sequence YSGH. H171 (proton donors) is an active-site residue. Topologically, residues 186–199 are cytoplasmic; it reads LQARMKGDWARLLR. The helical transmembrane segment at 200–220 threads the bilayer; sequence PMLQFGLIAFSIYVGLSRVSD. Residues 216–227 form a phosphatase sequence motif III region; the sequence is SRVSDYKHHWSD. Residues 221-229 are Extracellular-facing; that stretch reads YKHHWSDVT. H223 serves as the catalytic Nucleophile. Residues 230–250 form a helical membrane-spanning segment; that stretch reads VGLIQGAAMAILVALYVSDFF. Topologically, residues 251-283 are cytoplasmic; that stretch reads KDTHSYKERKEEDPHTTLHETASSRNYSTNHEP. The interval 260 to 283 is disordered; that stretch reads KEEDPHTTLHETASSRNYSTNHEP. Polar residues predominate over residues 269–283; it reads HETASSRNYSTNHEP.

The protein belongs to the PA-phosphatase related phosphoesterase family. In terms of assembly, forms functional homodimers and homooligomers that are not required for substrate recognition and catalytic activity. Can also form heterooligomers with PLPP2 and PLPP3. In terms of processing, N-glycosylated. N-linked sugars are of the complex type. N-glycosylation is not required for the phosphatase activity. As to expression, widely expressed. Highly expressed in kidney and lung. Almost undetectable in brain, heart, bone, muscle or spleen.

It is found in the cell membrane. It localises to the apical cell membrane. The protein resides in the membrane raft. Its subcellular location is the membrane. The protein localises to the caveola. The enzyme catalyses a 1,2-diacyl-sn-glycero-3-phosphate + H2O = a 1,2-diacyl-sn-glycerol + phosphate. The catalysed reaction is 1,2-dihexadecanoyl-sn-glycero-3-phosphate + H2O = 1,2-dihexadecanoyl-sn-glycerol + phosphate. It catalyses the reaction 1,2-di-(9Z-octadecenoyl)-sn-glycero-3-phosphate + H2O = 1,2-di-(9Z-octadecenoyl)-sn-glycerol + phosphate. It carries out the reaction a monoacyl-sn-glycero-3-phosphate + H2O = a monoacylglycerol + phosphate. The enzyme catalyses (9Z)-octadecenoyl-sn-glycero-3-phosphate + H2O = (9Z-octadecenoyl)-glycerol + phosphate. The catalysed reaction is a 1-acyl-sn-glycero-3-phosphate + H2O = a 1-acyl-sn-glycerol + phosphate. It catalyses the reaction 1-(9Z-octadecenoyl)-sn-glycero-3-phosphate + H2O = 1-(9Z-octadecenoyl)-sn-glycerol + phosphate. It carries out the reaction a 1,2-diacyl-sn-glycerol 3-diphosphate + H2O = a 1,2-diacyl-sn-glycero-3-phosphate + phosphate + H(+). The enzyme catalyses sphing-4-enine 1-phosphate + H2O = sphing-4-enine + phosphate. The catalysed reaction is an N-acylsphing-4-enine 1-phosphate + H2O = an N-acylsphing-4-enine + phosphate. It catalyses the reaction N-(octanoyl)-sphing-4-enine-1-phosphate + H2O = N-octanoylsphing-4-enine + phosphate. It carries out the reaction N-(9Z-octadecenoyl)-ethanolamine phosphate + H2O = N-(9Z-octadecenoyl) ethanolamine + phosphate. The enzyme catalyses 1-hexadecanoyl-2-(9Z-octadecenoyl)-sn-glycero-3-phosphate + H2O = 1-hexadecanoyl-2-(9Z-octadecenoyl)-sn-glycerol + phosphate. It functions in the pathway lipid metabolism; phospholipid metabolism. With respect to regulation, magnesium-independent phospholipid phosphatase. Insensitive to N-ethylmaleimide. Its function is as follows. Magnesium-independent phospholipid phosphatase of the plasma membrane that catalyzes the dephosphorylation of a variety of glycerolipid and sphingolipid phosphate esters including phosphatidate/PA, lysophosphatidate/LPA, diacylglycerol pyrophosphate/DGPP, sphingosine 1-phosphate/S1P and ceramide 1-phosphate/C1P. Also acts on N-oleoyl ethanolamine phosphate/N-(9Z-octadecenoyl)-ethanolamine phosphate, a potential physiological compound. Through its extracellular phosphatase activity allows both the hydrolysis and the cellular uptake of these bioactive lipid mediators from the milieu, regulating signal transduction in different cellular processes. It is for instance essential for the extracellular hydrolysis of S1P and subsequent conversion into intracellular S1P. Involved in the regulation of inflammation, platelets activation, cell proliferation and migration among other processes. May also have an intracellular activity to regulate phospholipid-mediated signaling pathways. In Mus musculus (Mouse), this protein is Phospholipid phosphatase 1.